We begin with the raw amino-acid sequence, 336 residues long: Polyprenyl transferase dpasC (336 aa).

A helical transmembrane segment spans residues 34-54; that stretch reads LFTIFAGGMFLFVASFPTTAF. N-linked (GlcNAc...) asparagine glycosylation occurs at asparagine 66. 7 helical membrane-spanning segments follow: residues 80-100, 125-145, 181-201, 205-225, 253-273, 274-294, and 311-331; these read ALCL…NDWI, QAML…HFML, YILG…IFHG, FAES…WTIF, HVHL…PMYL, NQFH…LSLL, and LHVD…IELL.

It belongs to the UbiA prenyltransferase family. It depends on Mg(2+) as a cofactor.

It is found in the membrane. The protein operates within secondary metabolite biosynthesis; terpenoid biosynthesis. Functionally, polyprenyl transferase; part of the gene cluster that mediates the biosynthesis of the diterpenoid pyrones subglutinols A and B. The first step of the pathway is the synthesis of the alpha-pyrone moiety by the polyketide synthase dpasA via condensation of one acetyl-CoA starter unit with 3 malonyl-CoA units and 2 methylations. The alpha-pyrone is then combined with geranylgeranyl pyrophosphate (GGPP) formed by the GGPP synthase dpasD through the action of the prenyltransferase dpasC to yield a linear alpha-pyrone diterpenoid. Subsequent steps in the diterpenoid pyrone biosynthetic pathway involve the decalin core formation, which is initiated by the epoxidation of the C10-C11 olefin by the FAD-dependent oxidoreductase dpasE, and is followed by a cyclization cascade catalyzed by the terpene cyclase dpasB. The FAD-linked oxidoreductase dpasF is then involved in tetrahydrofuran (THF) ring formation at the C5 unit to complete the formation of subglutinols A and B. DpasF possesses also an additional catalytic ability of multi-step oxidations to generate a new DDP analog with an enone system at the C5 named FDDP A. In Apiospora sacchari (Arthrinium sacchari), this protein is Polyprenyl transferase dpasC.